The primary structure comprises 276 residues: Phospholipid phosphatase 2 (276 aa).

Topologically, residues 1–4 (MERR) are cytoplasmic. Residues 5–25 (WVFVLLDVLCVLVASLPFIIL) form a helical membrane-spanning segment. Topologically, residues 26 to 51 (TLVNAPYKRGFYCGDDSIRYPYRPDT) are lumenal. Residues 52–72 (ITHGLMAGVIITATVVLVSSG) traverse the membrane as a helical segment. The Cytoplasmic segment spans residues 73–87 (EAYLVYTDRLYSRSD). A helical transmembrane segment spans residues 88–108 (FNNYVAAIYKVLGTFLFGAAV). At 109 to 161 (SQSLTDLAKYMIGRLRPSFLAVCDPDWSRVNCSGYVQVEVCRGSPANVTEARL) the chain is on the lumenal side. A phosphatase sequence motif I region spans residues 117–125 (KYMIGRLRP). N-linked (GlcNAc...) asparagine glycans are attached at residues asparagine 139 and asparagine 155. The chain crosses the membrane as a helical span at residues 162–182 (SFYSGHSSFGMYCMLFLALYV). Residues 164 to 167 (YSGH) form a phosphatase sequence motif II region. Residue histidine 167 is the Proton donors of the active site. Topologically, residues 183–189 (QARLCWK) are cytoplasmic. A helical transmembrane segment spans residues 190–210 (WARLLRPTVQFFLVAFAIYVG). At 211 to 225 (YTRVSDNKHHWSDVL) the chain is on the lumenal side. The phosphatase sequence motif III stretch occupies residues 212–223 (TRVSDNKHHWSD). Histidine 219 acts as the Nucleophile in catalysis. Residues 226–246 (VGLLQGALVACLTVCYVSDFF) traverse the membrane as a helical segment. At 247 to 276 (KSRPPQSCQENEESERKPSLSLTLTLGDRP) the chain is on the cytoplasmic side. Residues 252–276 (QSCQENEESERKPSLSLTLTLGDRP) form a disordered region.

Belongs to the PA-phosphatase related phosphoesterase family. As to quaternary structure, forms functional homodimers and homooligomers. Can also form heterooligomers with PLPP1 and PLPP3. In terms of processing, N-glycosylated. As to expression, expressed in the brain.

It localises to the membrane. The protein resides in the cell membrane. Its subcellular location is the early endosome membrane. The protein localises to the endoplasmic reticulum membrane. The enzyme catalyses a 1,2-diacyl-sn-glycero-3-phosphate + H2O = a 1,2-diacyl-sn-glycerol + phosphate. It carries out the reaction 1,2-dihexadecanoyl-sn-glycero-3-phosphate + H2O = 1,2-dihexadecanoyl-sn-glycerol + phosphate. The catalysed reaction is 1,2-di-(9Z-octadecenoyl)-sn-glycero-3-phosphate + H2O = 1,2-di-(9Z-octadecenoyl)-sn-glycerol + phosphate. It catalyses the reaction a monoacyl-sn-glycero-3-phosphate + H2O = a monoacylglycerol + phosphate. The enzyme catalyses (9Z)-octadecenoyl-sn-glycero-3-phosphate + H2O = (9Z-octadecenoyl)-glycerol + phosphate. It carries out the reaction sphing-4-enine 1-phosphate + H2O = sphing-4-enine + phosphate. The catalysed reaction is an N-acylsphing-4-enine 1-phosphate + H2O = an N-acylsphing-4-enine + phosphate. It catalyses the reaction N-(octanoyl)-sphing-4-enine-1-phosphate + H2O = N-octanoylsphing-4-enine + phosphate. The enzyme catalyses N-(9Z-octadecenoyl)-ethanolamine phosphate + H2O = N-(9Z-octadecenoyl) ethanolamine + phosphate. The protein operates within lipid metabolism; phospholipid metabolism. Its activity is regulated as follows. Magnesium-independent phospholipid phosphatase. Insensitive to N-ethylmaleimide. Functionally, magnesium-independent phospholipid phosphatase that catalyzes the dephosphorylation of a variety of glycerolipid and sphingolipid phosphate esters including phosphatidate/PA, lysophosphatidate/LPA, sphingosine 1-phosphate/S1P and ceramide 1-phosphate/C1P. Has no apparent extracellular phosphatase activity and therefore most probably acts intracellularly. Also acts on N-oleoyl ethanolamine phosphate/N-(9Z-octadecenoyl)-ethanolamine phosphate, a potential physiological compound. Through dephosphorylation of these bioactive lipid mediators produces new bioactive compounds and may regulate signal transduction in different cellular processes. Indirectly regulates, for instance, cell cycle G1/S phase transition through its phospholipid phosphatase activity. This chain is Phospholipid phosphatase 2, found in Rattus norvegicus (Rat).